Reading from the N-terminus, the 307-residue chain is Taste receptor type 2 member 10 (307 aa).

Residues 1–6 (MLRVVE) are Extracellular-facing. The helical transmembrane segment at 7–27 (GIFIFVVISESVFGVLGNGFI) threads the bilayer. Topologically, residues 28-42 (GLVNCIDCAKNKLST) are cytoplasmic. Residues 43 to 63 (IGFILTGLAISRIFLIWIIIT) form a helical membrane-spanning segment. Over 64–100 (DGFIQIFSPNIYASSNLIEYISYFWVIGNQSSMWFAT) the chain is Extracellular. Residues 101–121 (SLSIFYFLKIANFSNYIFLWL) traverse the membrane as a helical segment. Residues 122–126 (KSRTN) lie on the Cytoplasmic side of the membrane. The helical transmembrane segment at 127 to 147 (MVLPFMIVFLLISSLLNFAYI) threads the bilayer. Residues 148 to 179 (AKILNDYKMKNDTVWDLNMYKSEYFIKQILLN) lie on the Extracellular side of the membrane. Asparagine 158 carries an N-linked (GlcNAc...) asparagine glycan. A helical transmembrane segment spans residues 180 to 200 (LGVIFFFTLSLITCVLLIISL). At 201 to 227 (WRHNRQMQSNVTGLRDSNTEAHVKAMK) the chain is on the cytoplasmic side. A helical transmembrane segment spans residues 228 to 248 (VLISFIILFILYFIGMAIEIS). Topologically, residues 249 to 257 (YFTVRENKL) are extracellular. A helical transmembrane segment spans residues 258-278 (LLMFGMTTTAIYPWGHSFILI). The Cytoplasmic portion of the chain corresponds to 279–307 (LGNSKLKQASLRVLQQLKCCEKRKNLRVT).

This sequence belongs to the G-protein coupled receptor T2R family.

It is found in the membrane. In terms of biological role, receptor that may play a role in the perception of bitterness and is gustducin-linked. May play a role in sensing the chemical composition of the gastrointestinal content. The activity of this receptor may stimulate alpha gustducin, mediate PLC-beta-2 activation and lead to the gating of TRPM5. This Pan paniscus (Pygmy chimpanzee) protein is Taste receptor type 2 member 10 (TAS2R10).